Here is a 103-residue protein sequence, read N- to C-terminus: Small ribosomal subunit protein uS10 (103 aa).

The protein belongs to the universal ribosomal protein uS10 family. In terms of assembly, part of the 30S ribosomal subunit.

Its function is as follows. Involved in the binding of tRNA to the ribosomes. This Vibrio cholerae serotype O1 (strain ATCC 39541 / Classical Ogawa 395 / O395) protein is Small ribosomal subunit protein uS10.